The following is a 1410-amino-acid chain: MGGQLSLLAQTAPSIGIFSYIDILDETHYVSQLNNSRFLKTCKALDPNGEIVVKVFIKPKEDSSLEKIIQRLKREAVLLSALPNVLNYSKIFESTRCGYLVRQHLKTNLYDRLSTRPYFTEIETKFVVFQLLQALKDIHDLDVIHGDIKTENLLLTSWDWVVLSDFCSNIKPAYIPDDNPGEFSFYFDTSKRRACYLAPEKFDSAKASGDGVHQATKEMDIFSLGCCIAELYLDGAALFNLSQLFKYKSGDYTLNDILPQTISKSSPVLKDILQDMLQVDPKKRLSAHELLEKYRTIYFPDTFYDFLYDYCKTLVTLGTSVPCADQIEVNTTLQDHLGSIDEILIKIYCDFGRICKSLKLPVLDQEDMNYNTKDSFLRVSDKLLRLENYETDKITASIQNEVSLIILVFLCKEFRNLQFPENKVKALQLILAFSLFVLDDTKLDRTLPYLVAALEDDSTRVKVMAMNCVTTLIKEVKHPNQLNENIFVDYLLPRVQALLQNGQEESLVRVAIASNLSDLALKANLFQEYCHTMQSSTIPNIVHDFESIEVIRKYSRKLQQLFEDLTVSILTDPEISVKVALLKNILPLCKYFGREKTNDVILSHLITYLNDRDPALRMYLVECISGIAILLGPITMEQYILPLIIQTITDEEELVVVSVLKNLKDLLKTRFVNKKYFYDITKFLSPLILHPNSWIRNFVLTTLVECINQMSKAEVYCVLYPVLRPFFDFDVDFTGDMLISCAKLPVSRNTYNLLRSWNNRSKKTFFWQRVTTNYVDAFGNSTINFVDKRYVKENYGLKTMKVESNIHLHTNENENIPLTLEDKFWIDKFKNSGLTDNELWKIVALREYVVRSSRSSSKKPETVTSIVSKLSLTPSNFSIENVMPNTVFFDIEFLHPETLTFNDLDVTNTNSIKESESNTFTDNHSKVIEMKGSLIFKTPRIPTTLSNLKNIYVQLEPTNNHSEGHAHLSARNQPANFIVKSSYEGQDKIIEKYLKQLNILPSLKEYKEFGFVSENTTAEADVINLHGKFVRSYPQIFDGTLLQSEVLLGTKSFMIYGSDQGALTVWDIDRLANEKSITRPLYYECSAEITCIKGLSGYDSFCVGLKSSEILIFRISLSKNGKAKNLQELICIRSLNLIGENSSEYPIQIECCPNNDQFQLVVLSNYSNVYLFDIRTMKVIEKLELNADYGCTISMVLDDKNNLLFFGTVSGIIEMWDARYFVQIRAWTFGESLPINKLAIMEQENKSLLVVCGGVDSAFFTLWNIEKLSCKHVFVRSNEQPSLDSFNVIDADKLDKLAFEKNNSNIKPIVQIFNNKVLYMDDIGRLLHILDTRNPEKSSTFAGSKVELHSFSVLQVTASLTMSLQKHNYQKEVNNSNYTSSRVMTVNVFQLKNKPYMLLTDEEGYINIYT.

The region spanning 27-299 is the Protein kinase domain; it reads THYVSQLNNS…LLEKYRTIYF (273 aa). ATP-binding positions include 33 to 41 and K54; that span reads LNNSRFLKT. D147 acts as the Proton acceptor in catalysis. 5 HEAT repeats span residues 441–478, 485–525, 556–594, 596–633, and 635–672; these read TKLDRTLPYLVAALEDDSTRVKVMAMNCVTTLIKEVKH, NIFV…KANL, RKLQQLFEDLTVSILTDPEISVKVALLKNILPLCKYFGR, KTNDVILSHLITYLNDRDPALRMYLVECISGIAILLGP, and TMEQYILPLIIQTITDEEELVVVSVLKNLKDLLKTRFV. WD repeat units lie at residues 1037–1076, 1187–1226, and 1230–1273; these read FDGTLLQSEVLLGTKSFMIYGSDQGALTVWDIDRLANEKS, ADYGCTISMVLDDKNNLLFFGTVSGIIEMWDARYFVQIRA, and GESL…CKHV.

This sequence belongs to the protein kinase superfamily. Ser/Thr protein kinase family. In terms of assembly, component of the autophagy-specific VPS34 PI3-kinase complex I composed of VPS15, VPS30, VPS34, ATG14 and ATG38; and of the VPS34 PI3-kinase complex II composed of VPS15, VPS30, VPS34 and VPS38. Post-translationally, autophosphorylated.

The protein localises to the golgi apparatus. It is found in the trans-Golgi network membrane. It localises to the endosome membrane. It carries out the reaction L-seryl-[protein] + ATP = O-phospho-L-seryl-[protein] + ADP + H(+). The catalysed reaction is L-threonyl-[protein] + ATP = O-phospho-L-threonyl-[protein] + ADP + H(+). Its function is as follows. Serine/threonine-protein kinase that plays a role in signaling in modulation of host immune response, intracellular survival and virulence. Required for impediment of phagosomal maturation in THP-1 macrophages. Regulatory subunit of the autophagy-specific VPS34 PI3-kinase complex I essential to recruit the ATG8-phosphatidylinositol conjugate and the ATG12-ATG5 conjugate to the pre-autophagosomal structure. Within the PS34 PI3-kinase complex I, VPS15-mediated phosphorylation of VPS34 may be required for recruiting VPS34 to the membrane but not for activation of its PI3K activity. Is also involved in endosome-to-Golgi retrograde transport as part of the VPS34 PI3-kinase complex II. This second complex is required for the endosome-to-Golgi retrieval of PEP1 and KEX2, and the recruitment of VPS5 and VPS7, two components of the retromer complex, to endosomal membranes (probably through the synthesis of a specific pool of phosphatidylinositol 3-phosphate recruiting the retromer to the endosomes). By regulating VPS34 kinase activity, VPS15 appears to be essential for the efficient delivery of soluble hydrolases to the yeast vacuole. The protein is non-specific serine/threonine protein kinase of Candida glabrata (strain ATCC 2001 / BCRC 20586 / JCM 3761 / NBRC 0622 / NRRL Y-65 / CBS 138) (Yeast).